The chain runs to 129 residues: Prefoldin subunit 6 (129 aa).

Ala2 is modified (N-acetylalanine). Position 21 is an N6-acetyllysine (Lys21). Lys66 carries the N6-acetyllysine; alternate modification. A Glycyl lysine isopeptide (Lys-Gly) (interchain with G-Cter in SUMO1); alternate cross-link involves residue Lys66. Lys66 is covalently cross-linked (Glycyl lysine isopeptide (Lys-Gly) (interchain with G-Cter in SUMO2); alternate).

Belongs to the prefoldin subunit beta family. In terms of assembly, heterohexamer of two PFD-alpha type and four PFD-beta type subunits. Component of the PAQosome complex which is responsible for the biogenesis of several protein complexes and which consists of R2TP complex members RUVBL1, RUVBL2, RPAP3 and PIH1D1, URI complex members PFDN2, PFDN6, PDRG1, UXT and URI1 as well as ASDURF, POLR2E and DNAAF10/WDR92.

Functionally, binds specifically to cytosolic chaperonin (c-CPN) and transfers target proteins to it. Binds to nascent polypeptide chain and promotes folding in an environment in which there are many competing pathways for nonnative proteins. In Homo sapiens (Human), this protein is Prefoldin subunit 6 (PFDN6).